Here is a 421-residue protein sequence, read N- to C-terminus: Putative B3 domain-containing protein Os08g0333500 (421 aa).

A DNA-binding region (TF-B3) is located at residues 1 to 51; sequence MTVELEKIAGSFFISKGWKTFVHRTGLLSGQYIRFQVLTPSKINVLLFDKK. The disordered stretch occupies residues 92–121; it reads SHTSNKETSSDSRTESMTDIPSSSDNSGET. Residues 95 to 107 show a composition bias toward basic and acidic residues; sequence SNKETSSDSRTES. Polar residues predominate over residues 108 to 121; sequence MTDIPSSSDNSGET.

The protein resides in the nucleus. This chain is Putative B3 domain-containing protein Os08g0333500, found in Oryza sativa subsp. japonica (Rice).